Reading from the N-terminus, the 463-residue chain is Putative F-box protein At3g29830 (463 aa).

One can recognise an F-box domain in the interval 7-55 (RDRISSLPDVVLVMILSFLSFKDNVKTSILSKRWRNICYEAKNISFKES).

This Arabidopsis thaliana (Mouse-ear cress) protein is Putative F-box protein At3g29830.